A 171-amino-acid chain; its full sequence is S-ribosylhomocysteine lyase (171 aa).

Fe cation contacts are provided by histidine 54, histidine 58, and cysteine 128.

It belongs to the LuxS family. As to quaternary structure, homodimer. It depends on Fe cation as a cofactor.

The catalysed reaction is S-(5-deoxy-D-ribos-5-yl)-L-homocysteine = (S)-4,5-dihydroxypentane-2,3-dione + L-homocysteine. Its function is as follows. Involved in the synthesis of autoinducer 2 (AI-2) which is secreted by bacteria and is used to communicate both the cell density and the metabolic potential of the environment. The regulation of gene expression in response to changes in cell density is called quorum sensing. Catalyzes the transformation of S-ribosylhomocysteine (RHC) to homocysteine (HC) and 4,5-dihydroxy-2,3-pentadione (DPD). This Shigella boydii serotype 4 (strain Sb227) protein is S-ribosylhomocysteine lyase.